The primary structure comprises 201 residues: MPIGVPKVPFRSPGEEDAVWVDVNRLHRERLLFLGQEVDSEISNQLVGLMVYLSIEDDTRDLYLFINSPGGWVIPGLTIYDTMQFVPPDVHTICMGLAASMGSFILVGGEITKRLAFPHARIMIHQPASSFYEAQAGEFILEAEELLKLRETLTRVYVQRTGNPLWIVSEDMERDVFMSATEAQAHGIVDLVAVENTGDFA.

Ser100 serves as the catalytic Nucleophile. His125 is an active-site residue.

The protein belongs to the peptidase S14 family. Component of the chloroplastic Clp protease core complex.

The protein resides in the plastid. It localises to the chloroplast stroma. The enzyme catalyses Hydrolysis of proteins to small peptides in the presence of ATP and magnesium. alpha-casein is the usual test substrate. In the absence of ATP, only oligopeptides shorter than five residues are hydrolyzed (such as succinyl-Leu-Tyr-|-NHMec, and Leu-Tyr-Leu-|-Tyr-Trp, in which cleavage of the -Tyr-|-Leu- and -Tyr-|-Trp bonds also occurs).. Functionally, cleaves peptides in various proteins in a process that requires ATP hydrolysis. Has a chymotrypsin-like activity. Plays a major role in the degradation of misfolded proteins. The sequence is that of ATP-dependent Clp protease proteolytic subunit from Chloranthus spicatus (Chulantree).